A 179-amino-acid polypeptide reads, in one-letter code: GTP-dependent dephospho-CoA kinase (179 aa).

The GTP site is built by Asp43, Val45, Asp62, Glu120, and Asp143.

It belongs to the GTP-dependent DPCK family.

The catalysed reaction is 3'-dephospho-CoA + GTP = GDP + CoA + H(+). It functions in the pathway cofactor biosynthesis; coenzyme A biosynthesis. In terms of biological role, catalyzes the GTP-dependent phosphorylation of the 3'-hydroxyl group of dephosphocoenzyme A to form coenzyme A (CoA). The protein is GTP-dependent dephospho-CoA kinase of Haloarcula marismortui (strain ATCC 43049 / DSM 3752 / JCM 8966 / VKM B-1809) (Halobacterium marismortui).